The sequence spans 483 residues: Alpha-tubulin N-acetyltransferase (483 aa).

Residues 1 to 186 form the N-acetyltransferase domain; the sequence is MEFRFNMHPL…NNFVVYEGFF (186 aa). Residues 120-133 and 156-165 each bind acetyl-CoA; these read FYVH…GLGR and SEKLLGFLQK. 3 disordered regions span residues 204-231, 330-395, and 437-472; these read TASP…QTRT, ETLP…VLGS, and SVKI…GGGH. The segment covering 347–369 has biased composition (basic and acidic residues); sequence YDFHPHHLELHDDTEGGGSHRDQ. Positions 370 to 383 are enriched in low complexity; it reads SLSPQSVSQQASPV.

It belongs to the acetyltransferase ATAT1 family.

The catalysed reaction is L-lysyl-[alpha-tubulin] + acetyl-CoA = N(6)-acetyl-L-lysyl-[alpha-tubulin] + CoA + H(+). Its function is as follows. Specifically acetylates 'Lys-40' in alpha-tubulin on the lumenal side of microtubules. Promotes microtubule destabilization and accelerates microtubule dynamics; this activity may be independent of acetylation activity. Acetylates alpha-tubulin with a slow enzymatic rate, due to a catalytic site that is not optimized for acetyl transfer. Enters the microtubule through each end and diffuses quickly throughout the lumen of microtubules. Acetylates only long/old microtubules because of its slow acetylation rate since it does not have time to act on dynamically unstable microtubules before the enzyme is released. The polypeptide is Alpha-tubulin N-acetyltransferase (Anopheles gambiae (African malaria mosquito)).